Here is a 279-residue protein sequence, read N- to C-terminus: Osmoprotective compounds uptake permease protein GgtC (279 aa).

Helical transmembrane passes span 7–27 (LLFL…LSFF), 58–78 (LWLV…AVLV), 90–110 (IIFL…KFVY), 120–140 (IGLL…WLVE), 146–166 (FALI…ILSA), 202–222 (LLVV…IVFV), and 247–267 (FGRG…VMIT). In terms of domain architecture, ABC transmembrane type-1 spans 53–270 (FRNNLLWLVL…IVPVMITNIR (218 aa)).

The protein belongs to the binding-protein-dependent transport system permease family. As to quaternary structure, the complex is composed of two ATP-binding proteins (GgtA), two transmembrane proteins (GgtC and GgtD) and a solute-binding protein (GgtB).

Its subcellular location is the cell membrane. In terms of biological role, part of the ABC transporter complex GgtABCD involved in the uptake of the osmoprotective compounds glucosylglycerol (GG), sucrose and trehalose. Responsible for the translocation of the substrate across the membrane. This Synechocystis sp. (strain ATCC 27184 / PCC 6803 / Kazusa) protein is Osmoprotective compounds uptake permease protein GgtC.